A 239-amino-acid polypeptide reads, in one-letter code: MLNIGLSGSTGKMGETILERIDKFKDCKIAAKFNSTNNLDDLDNFCKNSDVIIDFSTPEILEKLINYALKHNTKLVIGTTGLQPQHFKLLEKAAQTLPVLYSANMSIGANLLSYLAKEVTKILDDYDVEILETHHRNKKDSPSGTAVMLAETIASKKGLNITFNRGNRLRSEKEIGISSLRGGNVHGIHEISFLGDDEIITLKHEALNKNSFSIGAIKAAIWLQDKPSALYSMQDIYKI.

Residues 8–13 (GSTGKM), 78–80 (GTT), and 102–105 (SANM) each bind NAD(+). Catalysis depends on His134, which acts as the Proton donor/acceptor. (S)-2,3,4,5-tetrahydrodipicolinate is bound at residue His135. Lys138 acts as the Proton donor in catalysis. Residue 144 to 145 (GT) participates in (S)-2,3,4,5-tetrahydrodipicolinate binding.

The protein belongs to the DapB family.

The protein localises to the cytoplasm. It carries out the reaction (S)-2,3,4,5-tetrahydrodipicolinate + NAD(+) + H2O = (2S,4S)-4-hydroxy-2,3,4,5-tetrahydrodipicolinate + NADH + H(+). It catalyses the reaction (S)-2,3,4,5-tetrahydrodipicolinate + NADP(+) + H2O = (2S,4S)-4-hydroxy-2,3,4,5-tetrahydrodipicolinate + NADPH + H(+). The protein operates within amino-acid biosynthesis; L-lysine biosynthesis via DAP pathway; (S)-tetrahydrodipicolinate from L-aspartate: step 4/4. In terms of biological role, catalyzes the conversion of 4-hydroxy-tetrahydrodipicolinate (HTPA) to tetrahydrodipicolinate. This Rickettsia conorii (strain ATCC VR-613 / Malish 7) protein is 4-hydroxy-tetrahydrodipicolinate reductase.